Consider the following 336-residue polypeptide: Cell division protein ZipA (336 aa).

Topologically, residues 1 to 6 (MEDLQL) are periplasmic. Residues 7-27 (VLFVLGAIAIIAVLVHGFWSI) traverse the membrane as a helical segment. Topologically, residues 28-336 (RKQQPKPIKE…DYLRRIKAIV (309 aa)) are cytoplasmic. Disordered regions lie at residues 31-118 (QPKP…PVRA) and 174-200 (YGAT…EPLG). The segment covering 73–91 (LPSSRNHTSVPVMTLQKAS) has biased composition (polar residues). The segment covering 108-118 (TTAERAEPVRA) has biased composition (basic and acidic residues). Residues 179–193 (QASPQPASPVQSQAP) are compositionally biased toward low complexity.

This sequence belongs to the ZipA family. As to quaternary structure, interacts with FtsZ via their C-terminal domains.

The protein localises to the cell inner membrane. Its function is as follows. Essential cell division protein that stabilizes the FtsZ protofilaments by cross-linking them and that serves as a cytoplasmic membrane anchor for the Z ring. Also required for the recruitment to the septal ring of downstream cell division proteins. This chain is Cell division protein ZipA, found in Shewanella denitrificans (strain OS217 / ATCC BAA-1090 / DSM 15013).